The following is a 550-amino-acid chain: MPSRVLITSALPYANGPLHFGHIAGAYLPADVYARFRRLLGDDVLYICGSDEYGIAITLNAERVGLGYQEYVSMYHKVHKDTFDKLGISLDFFSRTTNPFHKAIVEDFYLELKSKGLVENQISFQLYSEDEKRFLADRYVEGTCPKCGFDGARGDECQKCGADYEATDLINPRSKLSGSQLVLKETEHAYFHLERMVEPLLAFIEKAYLPEHIRKFVVDYIKNLRPRAITRDLSWGIPVPDFPNKVFYVWFDAPIGYISATMDWAASVNTPDLWKDFWLEESTEYVQFIGKDNIPFHAAIFPAMELGQSIPYKKMNALISSEFYLLEGAQFSKSEGNFVDMDAFLDTYSLDKLRYVLAATAPETSDSEFTFLDFKTRCNSELVGKFGNFINRVLAFAEKNGFRELTCPEALEDKDRQFLDDCQRIVQEAQAYYSKYSLRKACSAIMELAALGNVYFNDQAPWKLLKEGFAHRVEAILFCACYCQKLLALIAYPILPGTAWEIWNMLAPKSLDLENQDKDRVKNLWNTEFIDFSDEVFSLTTPQLLFTIVD.

Residues 12 to 22 (PYANGPLHFGH) carry the 'HIGH' region motif. C144, C147, C157, and C160 together coordinate Zn(2+). The 'KMSKS' region signature appears at 330–334 (QFSKS). K333 lines the ATP pocket.

This sequence belongs to the class-I aminoacyl-tRNA synthetase family. MetG type 1 subfamily. Monomer. It depends on Zn(2+) as a cofactor.

Its subcellular location is the cytoplasm. The enzyme catalyses tRNA(Met) + L-methionine + ATP = L-methionyl-tRNA(Met) + AMP + diphosphate. In terms of biological role, is required not only for elongation of protein synthesis but also for the initiation of all mRNA translation through initiator tRNA(fMet) aminoacylation. The chain is Methionine--tRNA ligase from Chlamydia caviae (strain ATCC VR-813 / DSM 19441 / 03DC25 / GPIC) (Chlamydophila caviae).